A 673-amino-acid chain; its full sequence is Probable lysophospholipase 4 (673 aa).

The N-terminal stretch at 1–19 is a signal peptide; that stretch reads MYVNYIGLFAFVQISLTLA. N-linked (GlcNAc...) asparagine glycans are attached at residues asparagine 72, asparagine 125, asparagine 191, asparagine 194, asparagine 272, asparagine 301, asparagine 374, asparagine 404, asparagine 409, asparagine 481, asparagine 516, asparagine 545, and asparagine 574. One can recognise a PLA2c domain in the interval 74–615; the sequence is TCSNDNLLRP…QEYCWDGTLA (542 aa). The tract at residues 631-653 is disordered; the sequence is TTSRAPSGTTSGTASSTTSSSVA.

This sequence belongs to the lysophospholipase family.

The protein resides in the secreted. The catalysed reaction is a 1-acyl-sn-glycero-3-phosphocholine + H2O = sn-glycerol 3-phosphocholine + a fatty acid + H(+). Functionally, catalyzes the release of fatty acids from lysophospholipids. This is Probable lysophospholipase 4 (plb4) from Schizosaccharomyces pombe (strain 972 / ATCC 24843) (Fission yeast).